The chain runs to 413 residues: Hemolin (413 aa).

The first 19 residues, 1-19 (MAFKSIAVLSACIIVGSAL), serve as a signal peptide directing secretion. 4 Ig-like C2-type domains span residues 25–112 (PVLK…RVIS), 122–211 (PAKT…EEVV), 233–322 (PQYV…LKLT), and 327–413 (PKYE…VQVN). Disulfide bonds link C46–C97, C140–C199, C252–C305, and C349–C395. The N-linked (GlcNAc...) asparagine glycan is linked to N283.

It belongs to the hemolin family. Hemolymph.

The protein resides in the secreted. Its subcellular location is the extracellular space. Insect-immune protein. Forms a protein complex at the bacterial surface. Can inhibit hemocyte aggregation. The chain is Hemolin from Hyalophora cecropia (Cecropia moth).